The following is a 561-amino-acid chain: Acylcarnitine hydrolase (561 aa).

Positions 1–26 are cleaved as a signal peptide; sequence MARKQPHSWLNAVLFGLLLILIHVWG. C97 and C125 form a disulfide bridge. S230 (acyl-ester intermediate) is an active-site residue. An intrachain disulfide couples C282 to C293. Residues E347 and H459 each act as charge relay system in the active site.

The protein belongs to the type-B carboxylesterase/lipase family. In terms of tissue distribution, expressed in liver, stomach and kidney.

The protein resides in the microsome. Its subcellular location is the endoplasmic reticulum. The enzyme catalyses all-trans-retinyl hexadecanoate + H2O = all-trans-retinol + hexadecanoate + H(+). It carries out the reaction an O-acyl-(R)-carnitine + H2O = (R)-carnitine + a fatty acid + H(+). Hydrolase with high activity towards palmitoylcarnitine. Is also active with p-nitrophenylacetate and alpha-naphthylacetate. May also hydrolyze retinyl esters. The sequence is that of Acylcarnitine hydrolase from Rattus norvegicus (Rat).